Reading from the N-terminus, the 1077-residue chain is Ubiquitin-activating enzyme E1 2 (1077 aa).

The tract at residues 16–36 (SPMKKRRIDHTESADGSAINA) is disordered. Residues Ala-499, Asp-525, Arg-536, Lys-549, and 597 to 598 (DN) each bind ATP. Catalysis depends on Cys-653, which acts as the Glycyl thioester intermediate.

This sequence belongs to the ubiquitin-activating E1 family. Monomer. In terms of tissue distribution, expressed in leaves, flowers, roots and stems. Detected in germinating seeds, cotyledons, hypocotyls, vascular tissues, anthers, filaments, pollen, style, stigma, sepals, petals, ovary, developing ovules, funiculi and silique walls.

The catalysed reaction is ATP + ubiquitin + [E1 ubiquitin-activating enzyme]-L-cysteine = AMP + diphosphate + S-ubiquitinyl-[E1 ubiquitin-activating enzyme]-L-cysteine.. It functions in the pathway protein modification; protein ubiquitination. In terms of biological role, activates ubiquitin by first adenylating its C-terminal glycine residue with ATP, and thereafter linking this residue to the side chain of a cysteine residue in E1, yielding a ubiquitin-E1 thioester and free AMP. In Arabidopsis thaliana (Mouse-ear cress), this protein is Ubiquitin-activating enzyme E1 2 (UBA2).